A 465-amino-acid polypeptide reads, in one-letter code: Mitochondrial distribution and morphology protein 10 (465 aa).

The protein belongs to the MDM10 family. In terms of assembly, component of the ER-mitochondria encounter structure (ERMES) or MDM complex, composed of MMM1, MDM10, MDM12 and MDM34. Associates with the mitochondrial outer membrane sorting assembly machinery SAM(core) complex.

Its subcellular location is the mitochondrion outer membrane. Component of the ERMES/MDM complex, which serves as a molecular tether to connect the endoplasmic reticulum and mitochondria. Components of this complex are involved in the control of mitochondrial shape and protein biogenesis and may function in phospholipid exchange. MDM10 is involved in the late assembly steps of the general translocase of the mitochondrial outer membrane (TOM complex). Functions in the TOM40-specific route of the assembly of outer membrane beta-barrel proteins, including the association of TOM40 with the receptor TOM22 and small TOM proteins. Can associate with the SAM(core) complex as well as the MDM12-MMM1 complex, both involved in late steps of the major beta-barrel assembly pathway, that is responsible for biogenesis of all outer membrane beta-barrel proteins. May act as a switch that shuttles between both complexes and channels precursor proteins into the TOM40-specific pathway. Plays a role in mitochondrial morphology and in the inheritance of mitochondria. The chain is Mitochondrial distribution and morphology protein 10 from Eremothecium gossypii (strain ATCC 10895 / CBS 109.51 / FGSC 9923 / NRRL Y-1056) (Yeast).